Here is a 336-residue protein sequence, read N- to C-terminus: UDP-N-acetylenolpyruvoylglucosamine reductase (336 aa).

The region spanning 1–178 (MAHSLQTLHT…TTVHLALPKE (178 aa)) is the FAD-binding PCMH-type domain. Residue Arg-154 is part of the active site. The Proton donor role is filled by Ser-222. The active site involves Glu-318.

It belongs to the MurB family. The cofactor is FAD.

Its subcellular location is the cytoplasm. It carries out the reaction UDP-N-acetyl-alpha-D-muramate + NADP(+) = UDP-N-acetyl-3-O-(1-carboxyvinyl)-alpha-D-glucosamine + NADPH + H(+). It functions in the pathway cell wall biogenesis; peptidoglycan biosynthesis. Functionally, cell wall formation. This chain is UDP-N-acetylenolpyruvoylglucosamine reductase, found in Pseudoalteromonas translucida (strain TAC 125).